Here is a 297-residue protein sequence, read N- to C-terminus: Putative phosphate permease MJ0630 (297 aa).

The next 9 helical transmembrane spans lie at 2 to 22, 45 to 65, 67 to 87, 99 to 119, 121 to 141, 154 to 174, 180 to 200, 225 to 245, and 274 to 294; these read ITIE…LFIL, LLIL…NVGS, VNSL…VMTL, TVII…YVFG, ILLS…ILYS, ITMI…NLGS, VLGT…FLCL, FIAQ…GMPV, and NIIF…FIIN.

The protein belongs to the inorganic phosphate transporter (PiT) (TC 2.A.20) family.

Its subcellular location is the cell membrane. In terms of biological role, potential transporter for phosphate. The polypeptide is Putative phosphate permease MJ0630 (Methanocaldococcus jannaschii (strain ATCC 43067 / DSM 2661 / JAL-1 / JCM 10045 / NBRC 100440) (Methanococcus jannaschii)).